Consider the following 144-residue polypeptide: MNFKYIVAVSFLIASAYARSVQNDEQSLSQRDVLEEESLREIRGIGGKILSGLKTALKGAAKELASTYLHRRRTAEEHEVMKRLEAVMRDLDSLDYPEEASERETRGFNQDEIANLFTKKEKRILGPVLSMVGSALGGLIKKIG.

Residues 1–18 (MNFKYIVAVSFLIASAYA) form the signal peptide. 2 propeptides span residues 19–43 (RSVQ…REIR) and 74–123 (TAEE…KEKR). Isoleucine 143 carries the post-translational modification Isoleucine amide.

The protein belongs to the bombinin family. In terms of tissue distribution, expressed by the skin glands.

Its subcellular location is the secreted. Its function is as follows. Maximin-3 shows antibacterial activity against both Gram-positive and Gram-negative bacteria. It also shows antimicrobial activity against the fungus C.albicans, but not against A.flavus nor P.uticale. It has little hemolytic activity. It possess a significant cytotoxicity against tumor cell lines. It possess a significant anti-HIV activity. It shows high spermicidal activity. Maximin-H2 shows antibacterial activity against both Gram-positive and Gram-negative bacteria. It also shows antimicrobial activity against the fungus C.albicans. Shows strong hemolytic activity. This Bombina maxima (Giant fire-bellied toad) protein is Maximins 3/H2.